The primary structure comprises 298 residues: Interferon-inducible double-stranded RNA-dependent protein kinase activator A homolog B (298 aa).

3 DRBM domains span residues 20-87 (TPIQ…ILRG), 112-180 (NPVG…KFKT), and 225-293 (DYVK…YLKI).

This sequence belongs to the PRKRA family. Homodimer. Interacts with dicer1 and eif2ak2/pkr. Also able to interact with dsRNA. Associates with ribosomes. In terms of tissue distribution, expressed in brain, heart, kidney, liver, nerve and spleen.

It localises to the cytoplasm. The protein localises to the perinuclear region. Its subcellular location is the nucleus. It is found in the nucleolus. In terms of biological role, activates eif2ak2/pkr in the absence of double-stranded RNA (dsRNA), leading to phosphorylation of eif2s1/efi2-alpha and inhibition of translation and induction of apoptosis. Required for siRNA production by dicer1 and for subsequent siRNA-mediated post-transcriptional gene silencing. Does not seem to be required for processing of pre-miRNA to miRNA by dicer1. The chain is Interferon-inducible double-stranded RNA-dependent protein kinase activator A homolog B (prkra-b) from Xenopus laevis (African clawed frog).